We begin with the raw amino-acid sequence, 791 residues long: MASLSESEGTNRGSMWELDQNLDQPMDEEASRLKNMYREKKFSSLLLLRLAFQSLGVVFGDLGTSPLYVFYNAFPHGVDDEEDVIGALSLIIYTLTLIPLLKYVFVVLRANDNGQGGTFALYSLLCRHAKISTIPNQHKTDEDLTTYSRQTYEENSVGAKIKRWLEAHAYKRNCLLIVVLIGTCTAIGDGILTPAISVLSASGGIKVQNPNMSTDVVVIVSVIILIGLFSMQHYGTDKVGWLFAPIVLLWFILIGSVGALNIHKYKGSVLKAYNPVYIYRYFQRRNSDSWASLGGIMLSITGTEALFADLCHFPVFAIQIAFTLIVFPCLLLAYTGQAAYIIAHKDHVADAFYRSIPDSIYWPAFVIATAAAIVASQATISATYSIIKQALALGCFPRVKIVHTSKKFLGQIYIPDINWVLLILCIAVTAGFKNQSQIGNAYGTAVVIVMLVTTFLMVPIMLLVWKSHWILVVTFIVLSLMVEIPYFSACLLKIDQGGWVPLVIATAFFIIMYVWHFCTVKRYEFEMHSKVSMAWILGLGPSLGLVRVPGIGFVYTELASGVPHIFSHFITNLPAIHSVVVFVCVKYLPVYTVPMDERFLVRRIGPKNFHIFRCVARYGYKDLHKKDEDFEKMLFNCLLSFLRLESMMEGYSDSDDFSVPEQRTEGSISNAFLAEKTNNNTMCSNGDLSYSSQDSIVPVQSPLRGNSLLRYSSQASHTVSDELEFLNRCKDAGVVHILGNTIVLARRDSGIIKKIAVNYMYAFMRKICRENSVIFNVPHESLLNVGQIYYI.

At 1 to 49 (MASLSESEGTNRGSMWELDQNLDQPMDEEASRLKNMYREKKFSSLLLLR) the chain is on the cytoplasmic side. Residues 50–70 (LAFQSLGVVFGDLGTSPLYVF) form a helical membrane-spanning segment. The Extracellular segment spans residues 71–87 (YNAFPHGVDDEEDVIGA). The chain crosses the membrane as a helical span at residues 88–108 (LSLIIYTLTLIPLLKYVFVVL). Over 109–175 (RANDNGQGGT…EAHAYKRNCL (67 aa)) the chain is Cytoplasmic. Residues 176–196 (LIVVLIGTCTAIGDGILTPAI) traverse the membrane as a helical segment. Topologically, residues 197 to 215 (SVLSASGGIKVQNPNMSTD) are extracellular. Asn-211 carries N-linked (GlcNAc...) asparagine glycosylation. Residues 216–236 (VVVIVSVIILIGLFSMQHYGT) traverse the membrane as a helical segment. The Cytoplasmic portion of the chain corresponds to 237-238 (DK). The chain crosses the membrane as a helical span at residues 239–259 (VGWLFAPIVLLWFILIGSVGA). Residues 260 to 289 (LNIHKYKGSVLKAYNPVYIYRYFQRRNSDS) are Extracellular-facing. The chain crosses the membrane as a helical span at residues 290–310 (WASLGGIMLSITGTEALFADL). The Cytoplasmic segment spans residues 311–315 (CHFPV). A helical membrane pass occupies residues 316–338 (FAIQIAFTLIVFPCLLLAYTGQA). At 339-359 (AYIIAHKDHVADAFYRSIPDS) the chain is on the extracellular side. A helical membrane pass occupies residues 360-380 (IYWPAFVIATAAAIVASQATI). The Cytoplasmic segment spans residues 381–411 (SATYSIIKQALALGCFPRVKIVHTSKKFLGQ). Residues 412 to 432 (IYIPDINWVLLILCIAVTAGF) form a helical membrane-spanning segment. Residues 433 to 444 (KNQSQIGNAYGT) are Extracellular-facing. Asn-434 is a glycosylation site (N-linked (GlcNAc...) asparagine). The chain crosses the membrane as a helical span at residues 445–465 (AVVIVMLVTTFLMVPIMLLVW). The Cytoplasmic portion of the chain corresponds to 466–468 (KSH). Residues 469–489 (WILVVTFIVLSLMVEIPYFSA) traverse the membrane as a helical segment. Over 490–496 (CLLKIDQ) the chain is Extracellular. The helical transmembrane segment at 497 to 517 (GGWVPLVIATAFFIIMYVWHF) threads the bilayer. At 518-791 (CTVKRYEFEM…LLNVGQIYYI (274 aa)) the chain is on the cytoplasmic side.

It belongs to the HAK/KUP transporter (TC 2.A.72.3) family.

The protein localises to the membrane. Its function is as follows. High-affinity potassium transporter. In Oryza sativa subsp. japonica (Rice), this protein is Probable potassium transporter 11.